The following is a 56-amino-acid chain: Alpha-conotoxin Pn1.2 (56 aa).

A signal peptide spans 1 to 16; that stretch reads MFTVFLLVVLATTVVS. Residues 17-39 constitute a propeptide that is removed on maturation; that stretch reads FTSDRASDGGNAAMSDLIALTIK. Disulfide bonds link C41-C47 and C42-C55. The interval 43 to 45 is ser-Xaa-Pro motif, crucial for potent interaction with nAChR; the sequence is SHP. At C55 the chain carries Cysteine amide.

Belongs to the conotoxin A superfamily. Non-native isomers 'ribbon' (with disulfide connectivity C1-C4; C2-C3) and 'beads' (with disulfide connectivity C1-C2; C3-C4) also inhibit high voltage-activated (HVA) calcium channel currents in rat DRG neurons (20-30% inhibition at 1 uM toxin). As to expression, expressed by the venom duct.

The protein localises to the secreted. Functionally, alpha-conotoxins act on postsynaptic membranes, they bind to the nicotinic acetylcholine receptors (nAChR) and thus inhibit them. This toxin inhibits human alpha-7/CHRNA7 and alpha-9-alpha-10/CHRNA9/CHRNA10 AChR (complete inhibition at 3 uM of toxin). In addition, this toxin inhibits high voltage-activated (HVA) calcium channel currents in rat DRG neurons (22% inhibition at 1 uM toxin) probably by activating GABA(B) receptors (GABBR1 and/or GABBR2). The polypeptide is Alpha-conotoxin Pn1.2 (Conus pennaceus (Feathered cone)).